The following is a 352-amino-acid chain: Alanine racemase (352 aa).

Lys33 acts as the Proton acceptor; specific for D-alanine in catalysis. The residue at position 33 (Lys33) is an N6-(pyridoxal phosphate)lysine. Residue Arg129 coordinates substrate. The active-site Proton acceptor; specific for L-alanine is the Tyr250. Met298 provides a ligand contact to substrate.

This sequence belongs to the alanine racemase family. Pyridoxal 5'-phosphate is required as a cofactor.

The catalysed reaction is L-alanine = D-alanine. It functions in the pathway amino-acid biosynthesis; D-alanine biosynthesis; D-alanine from L-alanine: step 1/1. Its function is as follows. Catalyzes the interconversion of L-alanine and D-alanine. May also act on other amino acids. In Neisseria meningitidis serogroup C / serotype 2a (strain ATCC 700532 / DSM 15464 / FAM18), this protein is Alanine racemase (alr).